The chain runs to 171 residues: Small ribosomal subunit protein mS41 (171 aa).

A mitochondrion-targeting transit peptide spans 1–23 (MSLFKSLVARSGSGIRAAQIARQ). Residues 122-141 (REHKKGKKKNGGERNAKTVL) are disordered.

This sequence belongs to the mitochondrion-specific ribosomal protein mS41 family.

It localises to the mitochondrion. Involved in telomere length regulation. This Scheffersomyces stipitis (strain ATCC 58785 / CBS 6054 / NBRC 10063 / NRRL Y-11545) (Yeast) protein is Small ribosomal subunit protein mS41 (FYV4).